The chain runs to 75 residues: Small ribosomal subunit protein bS18 (75 aa).

This sequence belongs to the bacterial ribosomal protein bS18 family. Part of the 30S ribosomal subunit. Forms a tight heterodimer with protein bS6.

Functionally, binds as a heterodimer with protein bS6 to the central domain of the 16S rRNA, where it helps stabilize the platform of the 30S subunit. The polypeptide is Small ribosomal subunit protein bS18 (Moorella thermoacetica (strain ATCC 39073 / JCM 9320)).